The primary structure comprises 259 residues: Acyl-[acyl-carrier-protein]--UDP-N-acetylglucosamine O-acyltransferase (259 aa).

The protein belongs to the transferase hexapeptide repeat family. LpxA subfamily. Homotrimer.

The protein localises to the cytoplasm. The enzyme catalyses a (3R)-hydroxyacyl-[ACP] + UDP-N-acetyl-alpha-D-glucosamine = a UDP-3-O-[(3R)-3-hydroxyacyl]-N-acetyl-alpha-D-glucosamine + holo-[ACP]. Its pathway is glycolipid biosynthesis; lipid IV(A) biosynthesis; lipid IV(A) from (3R)-3-hydroxytetradecanoyl-[acyl-carrier-protein] and UDP-N-acetyl-alpha-D-glucosamine: step 1/6. Its function is as follows. Involved in the biosynthesis of lipid A, a phosphorylated glycolipid that anchors the lipopolysaccharide to the outer membrane of the cell. The sequence is that of Acyl-[acyl-carrier-protein]--UDP-N-acetylglucosamine O-acyltransferase from Akkermansia muciniphila (strain ATCC BAA-835 / DSM 22959 / JCM 33894 / BCRC 81048 / CCUG 64013 / CIP 107961 / Muc).